The primary structure comprises 371 residues: Protease PrtS (371 aa).

Zn(2+) is bound at residue His169. Glu170 is an active-site residue. His173 and Glu193 together coordinate Zn(2+). Catalysis depends on His273, which acts as the Proton donor. Residues 352 to 371 (KEEDKDKGKDEGKDKAETKV) are disordered.

This sequence belongs to the peptidase M4 family. Zn(2+) is required as a cofactor.

The protein localises to the secreted. Its activity is regulated as follows. Inhibited by 8 mM 1,10-phenanthroline, but not by EDTA or PMSF. Functionally, metalloprotease involved in the inhibition of insect antibacterial peptides. Reduces the antibacterial activity of G.mellonella hemolymph by 50%. Reduces the antibacterial activity of cecropin A by 80% and completely inhibits cecropin B. The sequence is that of Protease PrtS from Photorhabdus sp. (strain Az29).